Consider the following 872-residue polypeptide: Alanine--tRNA ligase (872 aa).

Residues histidine 567, histidine 571, cysteine 669, and histidine 673 each contribute to the Zn(2+) site.

This sequence belongs to the class-II aminoacyl-tRNA synthetase family. Zn(2+) is required as a cofactor.

Its subcellular location is the cytoplasm. It catalyses the reaction tRNA(Ala) + L-alanine + ATP = L-alanyl-tRNA(Ala) + AMP + diphosphate. Catalyzes the attachment of alanine to tRNA(Ala) in a two-step reaction: alanine is first activated by ATP to form Ala-AMP and then transferred to the acceptor end of tRNA(Ala). Also edits incorrectly charged Ser-tRNA(Ala) and Gly-tRNA(Ala) via its editing domain. This chain is Alanine--tRNA ligase, found in Streptococcus pyogenes serotype M12 (strain MGAS2096).